Reading from the N-terminus, the 109-residue chain is Elongin-C (109 aa).

This sequence belongs to the SKP1 family.

The protein localises to the nucleus. SIII, also known as elongin, is a general transcription elongation factor that increases the RNA polymerase II transcription elongation past template-encoded arresting sites. Subunit A is transcriptionally active and its transcription activity is strongly enhanced by binding to the dimeric complex of the SIII regulatory subunits B and C (elongin BC complex). In terms of biological role, the elongin BC complex seems to be involved as an adapter protein in the proteasomal degradation of target proteins via different E3 ubiquitin ligase complexes. The chain is Elongin-C (tceb1) from Dictyostelium discoideum (Social amoeba).